A 419-amino-acid chain; its full sequence is eIF5-mimic protein 1 (419 aa).

Residues 1–22 (MNKHQKPVLTGQRFKTRKRDEK) are disordered. The residue at position 117 (lysine 117) is an N6-acetyllysine. A W2 domain is found at 248-415 (VQQSLGTRKE…QNAEEESESE (168 aa)). Phosphoserine occurs at positions 412 and 414.

It belongs to the BZW family. As to quaternary structure, interacts with EIF3E, EIF2S2 and EIF3C.

Its subcellular location is the cytoplasm. Its function is as follows. Translation initiation regulator which represses non-AUG initiated translation and repeat-associated non-AUG (RAN) initiated translation by acting as a competitive inhibitor of eukaryotic translation initiation factor 5 (EIF5) function. Increases the accuracy of translation initiation by impeding EIF5-dependent translation from non-AUG codons by competing with it for interaction with EIF2S2 within the 43S pre-initiation complex (PIC) in an EIF3C-binding dependent manner. This Macaca fascicularis (Crab-eating macaque) protein is eIF5-mimic protein 1 (BZW2).